We begin with the raw amino-acid sequence, 171 residues long: Adenine phosphoribosyltransferase (171 aa).

Belongs to the purine/pyrimidine phosphoribosyltransferase family. As to quaternary structure, homodimer.

Its subcellular location is the cytoplasm. The enzyme catalyses AMP + diphosphate = 5-phospho-alpha-D-ribose 1-diphosphate + adenine. It functions in the pathway purine metabolism; AMP biosynthesis via salvage pathway; AMP from adenine: step 1/1. In terms of biological role, catalyzes a salvage reaction resulting in the formation of AMP, that is energically less costly than de novo synthesis. In Methylococcus capsulatus (strain ATCC 33009 / NCIMB 11132 / Bath), this protein is Adenine phosphoribosyltransferase.